The sequence spans 405 residues: Phosphopentomutase (405 aa).

Mn(2+)-binding residues include Asp-10, Asp-303, His-308, Asp-344, His-345, and His-356.

It belongs to the phosphopentomutase family. Mn(2+) is required as a cofactor.

The protein resides in the cytoplasm. It catalyses the reaction 2-deoxy-alpha-D-ribose 1-phosphate = 2-deoxy-D-ribose 5-phosphate. The catalysed reaction is alpha-D-ribose 1-phosphate = D-ribose 5-phosphate. Its pathway is carbohydrate degradation; 2-deoxy-D-ribose 1-phosphate degradation; D-glyceraldehyde 3-phosphate and acetaldehyde from 2-deoxy-alpha-D-ribose 1-phosphate: step 1/2. Its function is as follows. Isomerase that catalyzes the conversion of deoxy-ribose 1-phosphate (dRib-1-P) and ribose 1-phosphate (Rib-1-P) to deoxy-ribose 5-phosphate (dRib-5-P) and ribose 5-phosphate (Rib-5-P), respectively. The polypeptide is Phosphopentomutase (Shewanella denitrificans (strain OS217 / ATCC BAA-1090 / DSM 15013)).